The following is a 210-amino-acid chain: Redox-sensing transcriptional repressor Rex (210 aa).

Positions 17–56 (KYHRYLYELLKNDVDRISSKELSEKIGFTASQIRQDLNCF) form a DNA-binding region, H-T-H motif. An NAD(+)-binding site is contributed by 91–96 (GAGNIG).

It belongs to the transcriptional regulatory Rex family. As to quaternary structure, homodimer.

Its subcellular location is the cytoplasm. Its function is as follows. Modulates transcription in response to changes in cellular NADH/NAD(+) redox state. The polypeptide is Redox-sensing transcriptional repressor Rex (Clostridium botulinum (strain ATCC 19397 / Type A)).